Here is a 192-residue protein sequence, read N- to C-terminus: NADH dehydrogenase [ubiquinone] iron-sulfur protein 3 (192 aa).

Belongs to the complex I 30 kDa subunit family. As to quaternary structure, complex I is composed of about 45 different subunits. This is a component of the iron-sulfur (IP) fragment of the enzyme.

It is found in the mitochondrion inner membrane. The catalysed reaction is a ubiquinone + NADH + 5 H(+)(in) = a ubiquinol + NAD(+) + 4 H(+)(out). Functionally, core subunit of the mitochondrial membrane respiratory chain NADH dehydrogenase (Complex I) that is believed to belong to the minimal assembly required for catalysis. Complex I functions in the transfer of electrons from NADH to the respiratory chain. The immediate electron acceptor for the enzyme is believed to be ubiquinone. The polypeptide is NADH dehydrogenase [ubiquinone] iron-sulfur protein 3 (NAD9) (Patellifolia webbiana (Patellaria webbiana)).